The sequence spans 206 residues: Eukaryotic translation initiation factor isoform 4E-2 (206 aa).

Residues Cys103 and Cys142 are joined by a disulfide bond.

Belongs to the eukaryotic initiation factor 4E family. As to quaternary structure, EIF4F is a multi-subunit complex, the composition of which varies with external and internal environmental conditions. It is composed of at least EIF4A, EIF4E and EIF4G. EIF4E is also known to interact with other partners. In higher plants two isoforms of EIF4F have been identified, named isoform EIF4F and isoform EIF(iso)4F. Isoform EIF4F has subunits p220 and p26, whereas isoform EIF(iso)4F has subunits p82 and p28. In terms of processing, according to the redox status, the Cys-103-Cys-142 disulfide bridge may have a role in regulating protein function by affecting its ability to bind capped mRNA.

Recognizes and binds the 7-methylguanosine-containing mRNA cap during an early step in the initiation of protein synthesis and facilitates ribosome binding by inducing the unwinding of the mRNAs secondary structures. The chain is Eukaryotic translation initiation factor isoform 4E-2 from Oryza sativa subsp. japonica (Rice).